The chain runs to 78 residues: UPF0270 protein YPO0179/y3960/YP_0178 (78 aa).

The protein belongs to the UPF0270 family.

This chain is UPF0270 protein YPO0179/y3960/YP_0178, found in Yersinia pestis.